The following is a 372-amino-acid chain: NAD(P)H-quinone oxidoreductase subunit 1 (372 aa).

8 helical membrane passes run 27–47, 97–117, 128–148, 176–196, 204–224, 266–286, 308–328, and 347–367; these read IIWLPLPMLIVLVSAVVGVLV, ILFTTGPILVLVPVILSWLIV, VGIGIFLWIALSSIQPIGLLM, LALSVLAVVLMTNSLSTIDIV, ILSWNIWRQPVGFIIFWICAL, ILSALLVSILYLGGWGFPIPV, SIGIIMTVLKAYLLVFIAILL, and FLLPISLANLLLTAGLKLALP.

This sequence belongs to the complex I subunit 1 family. As to quaternary structure, NDH-1 is composed of at least 11 different subunits.

The protein resides in the cellular thylakoid membrane. It catalyses the reaction a plastoquinone + NADH + (n+1) H(+)(in) = a plastoquinol + NAD(+) + n H(+)(out). The catalysed reaction is a plastoquinone + NADPH + (n+1) H(+)(in) = a plastoquinol + NADP(+) + n H(+)(out). Functionally, NDH-1 shuttles electrons from an unknown electron donor, via FMN and iron-sulfur (Fe-S) centers, to quinones in the respiratory and/or the photosynthetic chain. The immediate electron acceptor for the enzyme in this species is believed to be plastoquinone. Couples the redox reaction to proton translocation, and thus conserves the redox energy in a proton gradient. This is NAD(P)H-quinone oxidoreductase subunit 1 from Prochlorococcus marinus (strain MIT 9515).